The chain runs to 359 residues: tRNA N6-adenosine threonylcarbamoyltransferase (359 aa).

Fe cation contacts are provided by H115 and H119. Substrate-binding positions include 137-141, D170, G183, and N283; that span reads LVSGG. D311 provides a ligand contact to Fe cation. Residues 328 to 359 form a disordered region; it reads APDSLDIAPRSRWPLDEKSAPVFGTGRRGAKA.

The protein belongs to the KAE1 / TsaD family. Fe(2+) serves as cofactor.

The protein localises to the cytoplasm. The enzyme catalyses L-threonylcarbamoyladenylate + adenosine(37) in tRNA = N(6)-L-threonylcarbamoyladenosine(37) in tRNA + AMP + H(+). Its function is as follows. Required for the formation of a threonylcarbamoyl group on adenosine at position 37 (t(6)A37) in tRNAs that read codons beginning with adenine. Is involved in the transfer of the threonylcarbamoyl moiety of threonylcarbamoyl-AMP (TC-AMP) to the N6 group of A37, together with TsaE and TsaB. TsaD likely plays a direct catalytic role in this reaction. In Brucella suis (strain ATCC 23445 / NCTC 10510), this protein is tRNA N6-adenosine threonylcarbamoyltransferase.